Reading from the N-terminus, the 423-residue chain is Glycine amidinotransferase, mitochondrial (423 aa).

A mitochondrion-targeting transit peptide spans 1–43; sequence MLRVRCLRGGSRGAEAVHYIGSRLGGSLTGWVQRTFQSTQAAT. Residues Ser46 and Ser49 each carry the phosphoserine modification. Asp170 is a binding site for arginine. Catalysis depends on residues Asp254 and His303. 4 residues coordinate arginine: Asp305, Arg322, Ser354, and Ser355. Position 385 is an N6-acetyllysine (Lys385). Catalysis depends on Cys407, which acts as the Amidino-cysteine intermediate.

It belongs to the amidinotransferase family. As to quaternary structure, homodimer. In terms of tissue distribution, expressed in kidney, brain, gonads, uterus, and embryonic head, chest and abdomen. Maternally expressed in the placenta and yolk sac of embryos.

The protein localises to the mitochondrion inner membrane. The enzyme catalyses L-arginine + glycine = guanidinoacetate + L-ornithine. It carries out the reaction 4-aminobutanoate + L-arginine = 4-guanidinobutanoate + L-ornithine. It catalyses the reaction beta-alanine + L-arginine = 3-guanidinopropanoate + L-ornithine. The catalysed reaction is taurine + L-arginine = taurocyamine + L-ornithine. It participates in amine and polyamine biosynthesis; creatine biosynthesis; creatine from L-arginine and glycine: step 1/2. Transamidinase that catalyzes the transfer of the amidino group of L-arginine onto the amino moiety of acceptor metabolites such as glycine, beta-alanine, gamma-aminobutyric acid (GABA) and taurine yielding the corresponding guanidine derivatives. Catalyzes the rate-limiting step of creatine biosynthesis, namely the transfer of the amidino group from L-arginine to glycine to generate guanidinoacetate, which is then methylated by GAMT to form creatine. Provides creatine as a source for ATP generation in tissues with high energy demands, in particular skeletal muscle, heart and brain. The sequence is that of Glycine amidinotransferase, mitochondrial (Gatm) from Mus musculus (Mouse).